A 303-amino-acid chain; its full sequence is Ribonucleoside-diphosphate reductase small subunit (303 aa).

Residues D60, E90, and H93 each coordinate Fe cation. Residue Y97 is part of the active site. Residues 147-167 (LLMILIEGIFFASSFASISYL) traverse the membrane as a helical segment. Fe cation-binding residues include E153, E187, and H190.

Belongs to the ribonucleoside diphosphate reductase small chain family. Heterotetramer composed of a homodimer of the large subunit (R1) and a homodimer of the small subunit (R2). Larger multisubunit protein complex are also active, composed of (R1)n(R2)n. Requires Fe cation as cofactor.

It is found in the host membrane. It carries out the reaction a 2'-deoxyribonucleoside 5'-diphosphate + [thioredoxin]-disulfide + H2O = a ribonucleoside 5'-diphosphate + [thioredoxin]-dithiol. Functionally, ribonucleoside-diphosphate reductase holoenzyme provides the precursors necessary for viral DNA synthesis. Allows virus growth in non-dividing cells, as well as reactivation from latency in infected hosts. Catalyzes the biosynthesis of deoxyribonucleotides from the corresponding ribonucleotides. The sequence is that of Ribonucleoside-diphosphate reductase small subunit from Suid herpesvirus 1 (strain Kaplan) (SuHV-1).